The sequence spans 690 residues: Calpain-9 (690 aa).

The segment at 1-24 (MPYLYRAPGPQAHPVPKDARITHS) is disordered. One can recognise a Calpain catalytic domain in the interval 42 to 337 (LFEDADFPAS…FDKVEICNLT (296 aa)). Ca(2+) contacts are provided by L81, G83, and D88. Residue C97 is part of the active site. E167 lines the Ca(2+) pocket. Active-site residues include H254 and N278. Residues E284, D291, L312, D314, and E316 each coordinate Ca(2+). Residues 338–521 (PDALEEDAIH…PPDQETEEEQ (184 aa)) are domain III. Residues 498–519 (GNVDIDLPEPPKPTPPDQETEE) form a disordered region. EF-hand domains follow at residues 518-552 (EEEQ…VLQK), 561-589 (LSLI…FKVF), and 591-626 (DKLK…AGFQ). The interval 522–690 (RFRALFEQVA…NEFIHLTMNI (169 aa)) is domain IV. Positions 574, 576, 578, 580, 585, 604, 606, 608, 610, and 615 each coordinate Ca(2+).

Belongs to the peptidase C2 family. In terms of tissue distribution, expressed predominantly in stomach.

Its function is as follows. Calcium-regulated non-lysosomal thiol-protease. The protein is Calpain-9 (CAPN9) of Homo sapiens (Human).